The primary structure comprises 597 residues: Arginine--tRNA ligase (597 aa).

The 'HIGH' region motif lies at 125 to 135 (PNTNKPLHLGH).

The protein belongs to the class-I aminoacyl-tRNA synthetase family. As to quaternary structure, monomer.

Its subcellular location is the cytoplasm. It catalyses the reaction tRNA(Arg) + L-arginine + ATP = L-arginyl-tRNA(Arg) + AMP + diphosphate. The sequence is that of Arginine--tRNA ligase from Porphyromonas gingivalis (strain ATCC 33277 / DSM 20709 / CIP 103683 / JCM 12257 / NCTC 11834 / 2561).